The chain runs to 53 residues: UPF0391 membrane protein gsr2640 (53 aa).

2 helical membrane passes run 4–24 (LLWLVVVLMVIAALLGFGGVV) and 32–49 (WFLIVAAVVLAVVGFVTG).

This sequence belongs to the UPF0391 family.

The protein localises to the cell membrane. In Gloeobacter violaceus (strain ATCC 29082 / PCC 7421), this protein is UPF0391 membrane protein gsr2640.